The following is a 160-amino-acid chain: Phosphopantetheine adenylyltransferase (160 aa).

A substrate-binding site is contributed by T10. ATP contacts are provided by residues 10–11 (TF) and H18. The substrate site is built by K42, L74, and R88. Residues 89-91 (GLR), E99, and 124-130 (NSFISST) contribute to the ATP site.

Belongs to the bacterial CoaD family. As to quaternary structure, homohexamer. The cofactor is Mg(2+).

The protein resides in the cytoplasm. The catalysed reaction is (R)-4'-phosphopantetheine + ATP + H(+) = 3'-dephospho-CoA + diphosphate. Its pathway is cofactor biosynthesis; coenzyme A biosynthesis; CoA from (R)-pantothenate: step 4/5. In terms of biological role, reversibly transfers an adenylyl group from ATP to 4'-phosphopantetheine, yielding dephospho-CoA (dPCoA) and pyrophosphate. This is Phosphopantetheine adenylyltransferase from Pseudoalteromonas atlantica (strain T6c / ATCC BAA-1087).